An 863-amino-acid polypeptide reads, in one-letter code: Scm-like with four MBT domains protein 1 (863 aa).

4 MBT repeats span residues 20-120 (FSWE…LEAP), 128-232 (SDWN…LQPP), 242-346 (ADWQ…INPP), and 354-451 (FDWA…LSTP). The interval 638-773 (KKKNKRIGRP…SDDENKPPSP (136 aa)) is disordered. Over residues 660–679 (KSSKRRKRRKNIFVHKKKRS) the composition is skewed to basic residues. The segment covering 680-691 (SASVDNTPVGSP) has biased composition (polar residues). Composition is skewed to acidic residues over residues 696–710 (GEDEEDADDGDEDSL) and 718–727 (QQEELQEESE). Over residues 734-744 (SSSSPTQSETP) the composition is skewed to low complexity. 2 positions are modified to phosphoserine: Ser764 and Ser772. An SAM domain is found at 793 to 861 (WSVADVVRFI…RIKFAFYEQF (69 aa)).

Interacts with MYOD1. Component of the SLC (SFMBT1-LSD1-CoREST) corepressor complex, which also contains KDM1A/LSD1 and RCOR1/CoREST. Interacts with KDM1A/LSD1 and RCOR1/CoREST. Interacts with MYOD1. Interacts with L3MBTL3. As to expression, highly expressed in the testis, low expression is detected in brain, kidney, heart and lung. Highly expressed in germ cells, where it associates with the synaptic regions of meiotic chromosomes in pachytene stage spermatocytes.

It localises to the nucleus. In terms of biological role, histone-binding protein, which is part of various corepressor complexes. Mediates the recruitment of corepressor complexes to target genes, followed by chromatin compaction and repression of transcription. Plays a role during myogenesis: required for the maintenance of undifferentiated states of myogenic progenitor cells via interaction with MYOD1. Interaction with MYOD1 leads to the recruitment of associated corepressors and silencing of MYOD1 target genes. Part of the SLC complex in germ cells, where it may play a role during spermatogenesis. This chain is Scm-like with four MBT domains protein 1 (Sfmbt1), found in Mus musculus (Mouse).